Here is a 617-residue protein sequence, read N- to C-terminus: UvrABC system protein C (617 aa).

A GIY-YIG domain is found at 22 to 100 (KLPGVYRFFD…IKALSPKYNI (79 aa)). The UVR domain occupies 209–244 (DELTRTLQHKMQTAAANLQFEEAARYRDQIQALGIM).

Belongs to the UvrC family. In terms of assembly, interacts with UvrB in an incision complex.

It localises to the cytoplasm. Functionally, the UvrABC repair system catalyzes the recognition and processing of DNA lesions. UvrC both incises the 5' and 3' sides of the lesion. The N-terminal half is responsible for the 3' incision and the C-terminal half is responsible for the 5' incision. In Neisseria meningitidis serogroup A / serotype 4A (strain DSM 15465 / Z2491), this protein is UvrABC system protein C.